A 340-amino-acid chain; its full sequence is Dihydroorotate dehydrogenase (quinone) (340 aa).

Residues 61–65 and Thr-85 contribute to the FMN site; that span reads AGLDK. Lys-65 is a binding site for substrate. Residue 110–114 coordinates substrate; that stretch reads NRMGF. FMN contacts are provided by Asn-138 and Asn-171. Asn-171 lines the substrate pocket. Residue Ser-174 is the Nucleophile of the active site. Substrate is bound at residue Asn-176. Positions 216 and 244 each coordinate FMN. 245 to 246 lines the substrate pocket; sequence NT. FMN contacts are provided by residues Gly-267, Gly-296, and 317–318; that span reads YS.

This sequence belongs to the dihydroorotate dehydrogenase family. Type 2 subfamily. In terms of assembly, monomer. FMN serves as cofactor.

The protein resides in the cell membrane. It carries out the reaction (S)-dihydroorotate + a quinone = orotate + a quinol. Its pathway is pyrimidine metabolism; UMP biosynthesis via de novo pathway; orotate from (S)-dihydroorotate (quinone route): step 1/1. Catalyzes the conversion of dihydroorotate to orotate with quinone as electron acceptor. The sequence is that of Dihydroorotate dehydrogenase (quinone) from Ectopseudomonas mendocina (strain ymp) (Pseudomonas mendocina).